The primary structure comprises 382 residues: Dual-specificity RNA methyltransferase RlmN (382 aa).

Glu-91 functions as the Proton acceptor in the catalytic mechanism. The region spanning 97-339 (ETDRGTLCIS…TTVRKTRGDD (243 aa)) is the Radical SAM core domain. Cys-104 and Cys-344 form a disulfide bridge. Residues Cys-111, Cys-115, and Cys-118 each contribute to the [4Fe-4S] cluster site. S-adenosyl-L-methionine is bound by residues 165–166 (GE), Ser-197, 219–221 (SLH), and Asn-301. Residue Cys-344 is the S-methylcysteine intermediate of the active site.

Belongs to the radical SAM superfamily. RlmN family. It depends on [4Fe-4S] cluster as a cofactor.

Its subcellular location is the cytoplasm. It catalyses the reaction adenosine(2503) in 23S rRNA + 2 reduced [2Fe-2S]-[ferredoxin] + 2 S-adenosyl-L-methionine = 2-methyladenosine(2503) in 23S rRNA + 5'-deoxyadenosine + L-methionine + 2 oxidized [2Fe-2S]-[ferredoxin] + S-adenosyl-L-homocysteine. The enzyme catalyses adenosine(37) in tRNA + 2 reduced [2Fe-2S]-[ferredoxin] + 2 S-adenosyl-L-methionine = 2-methyladenosine(37) in tRNA + 5'-deoxyadenosine + L-methionine + 2 oxidized [2Fe-2S]-[ferredoxin] + S-adenosyl-L-homocysteine. Functionally, specifically methylates position 2 of adenine 2503 in 23S rRNA and position 2 of adenine 37 in tRNAs. m2A2503 modification seems to play a crucial role in the proofreading step occurring at the peptidyl transferase center and thus would serve to optimize ribosomal fidelity. This is Dual-specificity RNA methyltransferase RlmN from Polaromonas naphthalenivorans (strain CJ2).